A 548-amino-acid polypeptide reads, in one-letter code: Rhodopsin kinase grk7-b (548 aa).

Phosphoserine; by PKA is present on S33. The RGS domain maps to 53 to 172 (FEDICEQQPI…QTSLFFDRFV (120 aa)). Positions 187–446 (FYEFRTLGKG…NDDPRKHEFF (260 aa)) constitute a Protein kinase domain. Residues 193-201 (LGKGGFGEV) and K216 each bind ATP. Catalysis depends on D312, which acts as the Proton acceptor. In terms of domain architecture, AGC-kinase C-terminal spans 447–512 (KSINFPRLEA…GVVPIAWQQE (66 aa)). Positions 520–548 (DELSDPNRKESAAGLEDEEQQKSKSCTLL) are disordered. Cysteine methyl ester is present on C545. C545 carries S-geranylgeranyl cysteine lipidation. A propeptide spans 546-548 (TLL) (removed in mature form).

Belongs to the protein kinase superfamily. AGC Ser/Thr protein kinase family. GPRK subfamily. In terms of processing, phosphorylation at Ser-33 is regulated by light and activated by cAMP. In terms of tissue distribution, expressed in the eyes (at protein level). Expressed in the eyes, the pineal gland and in the brain.

Its subcellular location is the membrane. The catalysed reaction is L-threonyl-[rhodopsin] + ATP = O-phospho-L-threonyl-[rhodopsin] + ADP + H(+). It catalyses the reaction L-seryl-[rhodopsin] + ATP = O-phospho-L-seryl-[rhodopsin] + ADP + H(+). In terms of biological role, retina-specific kinase involved in the shutoff of the photoresponse and adaptation to changing light conditions via cone opsin phosphorylation, including rhodopsin (RHO). The protein is Rhodopsin kinase grk7-b (grk7b) of Danio rerio (Zebrafish).